The primary structure comprises 696 residues: DNA ligase (696 aa).

NAD(+) contacts are provided by residues 43-47 (DGEFD), 92-93 (SL), and E122. Catalysis depends on K124, which acts as the N6-AMP-lysine intermediate. NAD(+)-binding residues include R145, E185, K301, and K325. Zn(2+) contacts are provided by C419, C422, C438, and C444. Positions 608 to 696 (SIPRNLEGLS…GPDAVAESGV (89 aa)) constitute a BRCT domain.

It belongs to the NAD-dependent DNA ligase family. LigA subfamily. Mg(2+) is required as a cofactor. The cofactor is Mn(2+).

It carries out the reaction NAD(+) + (deoxyribonucleotide)n-3'-hydroxyl + 5'-phospho-(deoxyribonucleotide)m = (deoxyribonucleotide)n+m + AMP + beta-nicotinamide D-nucleotide.. Functionally, DNA ligase that catalyzes the formation of phosphodiester linkages between 5'-phosphoryl and 3'-hydroxyl groups in double-stranded DNA using NAD as a coenzyme and as the energy source for the reaction. It is essential for DNA replication and repair of damaged DNA. The chain is DNA ligase from Rhodococcus jostii (strain RHA1).